A 552-amino-acid chain; its full sequence is CTP synthase (552 aa).

The amidoligase domain stretch occupies residues 1-270 (MTKFVFVTGG…DGLICDKLRL (270 aa)). CTP is bound at residue S13. S13 lines the UTP pocket. Residues 14 to 19 (SLGKGI) and D71 contribute to the ATP site. Positions 71 and 144 each coordinate Mg(2+). CTP-binding positions include 151–153 (DIE), 191–196 (KTKPTQ), and K227. UTP is bound by residues 191 to 196 (KTKPTQ) and K227. The 254-residue stretch at 295–548 (QIAMVGKYVE…IKAAVEHQKP (254 aa)) folds into the Glutamine amidotransferase type-1 domain. G357 is an L-glutamine binding site. Residue C384 is the Nucleophile; for glutamine hydrolysis of the active site. L-glutamine contacts are provided by residues 385–388 (LGMQ) and E408. The tract at residues 432 to 451 (KTRSENSDLGGTMRLGAQSS) is disordered. R474 serves as a coordination point for L-glutamine. Active-site residues include H521 and E523.

Belongs to the CTP synthase family. In terms of assembly, homotetramer.

The enzyme catalyses UTP + L-glutamine + ATP + H2O = CTP + L-glutamate + ADP + phosphate + 2 H(+). It carries out the reaction L-glutamine + H2O = L-glutamate + NH4(+). It catalyses the reaction UTP + NH4(+) + ATP = CTP + ADP + phosphate + 2 H(+). It participates in pyrimidine metabolism; CTP biosynthesis via de novo pathway; CTP from UDP: step 2/2. Allosterically activated by GTP, when glutamine is the substrate; GTP has no effect on the reaction when ammonia is the substrate. The allosteric effector GTP functions by stabilizing the protein conformation that binds the tetrahedral intermediate(s) formed during glutamine hydrolysis. Inhibited by the product CTP, via allosteric rather than competitive inhibition. In terms of biological role, catalyzes the ATP-dependent amination of UTP to CTP with either L-glutamine or ammonia as the source of nitrogen. Regulates intracellular CTP levels through interactions with the four ribonucleotide triphosphates. This is CTP synthase from Acidovorax sp. (strain JS42).